The primary structure comprises 267 residues: MSFPYFISPEQAMRERSELARKGIARGKSVVALAFAGGVLFVAENPSRSLQKISELYDRVGFAAAGKFNEFDNLRRGGIQFADTRGYAYDRRDVTGRQLANVYAQTLGTIFTEQAKPYEVELCVAEVAHYGETKAPELYRITYDGSIADEPHFVVMGGTTEPITTALKNTYTENADLPDALDIAVEALRAGSAENSSNDQPVLGVASLEAAILDANKPRRAFRRLTRSTLETLLQERDSKESAESEEPIESEEGKKTGKKSDADSSD.

A disordered region spans residues 231–267 (ETLLQERDSKESAESEEPIESEEGKKTGKKSDADSSD). Composition is skewed to basic and acidic residues over residues 234-243 (LQERDSKESA) and 252-267 (EEGK…DSSD).

Belongs to the peptidase T1A family. The 20S proteasome core is composed of 14 alpha and 14 beta subunits that assemble into four stacked heptameric rings, resulting in a barrel-shaped structure. The two inner rings, each composed of seven catalytic beta subunits, are sandwiched by two outer rings, each composed of seven alpha subunits. The catalytic chamber with the active sites is on the inside of the barrel. Has a gated structure, the ends of the cylinder being occluded by the N-termini of the alpha-subunits. Is capped by the proteasome-associated ATPase, ARC.

Its subcellular location is the cytoplasm. The protein operates within protein degradation; proteasomal Pup-dependent pathway. Its activity is regulated as follows. The formation of the proteasomal ATPase ARC-20S proteasome complex, likely via the docking of the C-termini of ARC into the intersubunit pockets in the alpha-rings, may trigger opening of the gate for substrate entry. Interconversion between the open-gate and close-gate conformations leads to a dynamic regulation of the 20S proteasome proteolysis activity. In terms of biological role, component of the proteasome core, a large protease complex with broad specificity involved in protein degradation. This chain is Proteasome subunit alpha, found in Mycobacterium ulcerans (strain Agy99).